The chain runs to 255 residues: AA9 family lytic polysaccharide monooxygenase D (255 aa).

An N-terminal signal peptide occupies residues Met-1–Gly-19. Residues His-18 and His-92 each coordinate Cu(2+). 2 disulfides stabilise this stretch: Cys-65–Cys-189 and Cys-104–Cys-111. The N-linked (GlcNAc...) asparagine glycan is linked to Asn-152. O2-binding residues include His-178 and Gln-184. A Cu(2+)-binding site is contributed by Tyr-186. The N-linked (GlcNAc...) asparagine glycan is linked to Asn-220.

This sequence belongs to the polysaccharide monooxygenase AA9 family. Cu(2+) is required as a cofactor.

Its subcellular location is the secreted. The enzyme catalyses [(1-&gt;4)-beta-D-glucosyl]n+m + reduced acceptor + O2 = 4-dehydro-beta-D-glucosyl-[(1-&gt;4)-beta-D-glucosyl]n-1 + [(1-&gt;4)-beta-D-glucosyl]m + acceptor + H2O.. Functionally, lytic polysaccharide monooxygenase (LPMO) that depolymerizes crystalline and amorphous polysaccharides via the oxidation of scissile alpha- or beta-(1-4)-glycosidic bonds, yielding specifically C1 oxidation product. Catalysis by LPMOs requires the reduction of the active-site copper from Cu(II) to Cu(I) by a reducing agent and H(2)O(2) or O(2) as a cosubstrate. Is active on regenerated amorphous cellulose (RAC) in the presence of ascorbic acid or 3-methylcatechol. Also acts on phosphoric acid swollen cellulose (PASC) as a substrate. The protein is AA9 family lytic polysaccharide monooxygenase D of Thermothelomyces thermophilus (strain ATCC 42464 / BCRC 31852 / DSM 1799) (Sporotrichum thermophile).